The primary structure comprises 262 residues: Dihydroorotate dehydrogenase B (NAD(+)), electron transfer subunit (262 aa).

The FAD-binding FR-type domain maps to 3-104 (KLQEMMTIVS…MGPLGNGFPV (102 aa)). FAD-binding positions include 53–56 (RPIS), 70–72 (LYR), and 79–80 (GT). 4 residues coordinate [2Fe-2S] cluster: cysteine 226, cysteine 231, cysteine 234, and cysteine 249.

This sequence belongs to the PyrK family. In terms of assembly, heterotetramer of 2 PyrK and 2 PyrD type B subunits. The cofactor is [2Fe-2S] cluster. Requires FAD as cofactor.

It participates in pyrimidine metabolism; UMP biosynthesis via de novo pathway; orotate from (S)-dihydroorotate (NAD(+) route): step 1/1. In terms of biological role, responsible for channeling the electrons from the oxidation of dihydroorotate from the FMN redox center in the PyrD type B subunit to the ultimate electron acceptor NAD(+). The protein is Dihydroorotate dehydrogenase B (NAD(+)), electron transfer subunit of Lactococcus lactis subsp. lactis (strain IL1403) (Streptococcus lactis).